Here is a 354-residue protein sequence, read N- to C-terminus: UPF0283 membrane protein plu2581 (354 aa).

Transmembrane regions (helical) follow at residues 71-91, 101-121, and 214-234; these read MVYG…VQWI, SALG…GSLV, and ESAL…FIAW.

It belongs to the UPF0283 family.

The protein localises to the cell inner membrane. This is UPF0283 membrane protein plu2581 from Photorhabdus laumondii subsp. laumondii (strain DSM 15139 / CIP 105565 / TT01) (Photorhabdus luminescens subsp. laumondii).